Here is a 90-residue protein sequence, read N- to C-terminus: Probable Fe(2+)-trafficking protein (90 aa).

It belongs to the Fe(2+)-trafficking protein family.

Functionally, could be a mediator in iron transactions between iron acquisition and iron-requiring processes, such as synthesis and/or repair of Fe-S clusters in biosynthetic enzymes. This Photobacterium profundum (strain SS9) protein is Probable Fe(2+)-trafficking protein.